The primary structure comprises 560 residues: Choline/ethanolamine transporter FLVCR1 (560 aa).

A disordered region spans residues 1 to 43; that stretch reads MARPDDEVGPAVAPGHPLGKGYLPVPKGAPDGEARLVPQNGPE. Over 1 to 92 the chain is Cytoplasmic; the sequence is MARPDDEVGP…EDVPCPACPP (92 aa). Residues 93 to 117 form a helical membrane-spanning segment; that stretch reads RTALSPRRFVVLLIFSLYSLVNAFQ. Residues 118-135 are Extracellular-facing; it reads WIQYSSISNVFEDFYEVS. A helical transmembrane segment spans residues 136 to 163; it reads PLHINWLSMVYMVAYVPLIFPATWLLDT. Residues 164-165 lie on the Cytoplasmic side of the membrane; that stretch reads RG. Residues 166 to 185 traverse the membrane as a helical segment; sequence LRLTALLGSGLNCLGAWVKC. Residues 186 to 192 lie on the Extracellular side of the membrane; the sequence is GSVQRHL. The helical transmembrane segment at 193–221 threads the bilayer; sequence FWVTMLGQILCSVAQVFILGLPSPVASVW. An ethanolamine-binding site is contributed by Gln207. Over 222–226 the chain is Cytoplasmic; sequence FGPKE. Residues 227 to 252 form a helical membrane-spanning segment; it reads VSTACATAVLGNQLGTAVGFLLPPVL. At 253-270 the chain is on the extracellular side; the sequence is VPALGTQNNTGLLAHTQN. Asn270 is a glycosylation site (N-linked (GlcNAc...) asparagine). A helical membrane pass occupies residues 271–300; the sequence is NTDLLAHNINTMFYGTAFISTFLFFLTVIA. Over 301–336 the chain is Cytoplasmic; the sequence is FKEKPPLPPSQAQAILRDSPPEEYSYKSSIWNLCRN. The helical transmembrane segment at 337–367 threads the bilayer; it reads IPFVLLLVSYGIMTGAFYSISTLLNQIILTY. Residues 368-371 lie on the Extracellular side of the membrane; the sequence is YVGE. The helical transmembrane segment at 372-400 threads the bilayer; the sequence is EVNAGRIGLTLVVAGMVGSILCGLWLDYT. Topologically, residues 401–402 are cytoplasmic; the sequence is KT. A helical membrane pass occupies residues 403–425; that stretch reads YKQTTLIVYVLSFIGMLIFTFTL. The Extracellular portion of the chain corresponds to 426–428; it reads NLG. A helical transmembrane segment spans residues 429–458; it reads YIVALFFTGGILGFFMTGYLPLGFEFAVEI. Residues 459 to 466 are Cytoplasmic-facing; that stretch reads TYPESEGM. A helical transmembrane segment spans residues 467–492; sequence SSGLLNTAAQILGIFFTLAQGKITTD. Gln476 is a binding site for ethanolamine. Position 476 (Gln476) interacts with choline. Residues 493–495 are Extracellular-facing; that stretch reads YNS. Residues 496–518 traverse the membrane as a helical segment; that stretch reads PEAGNIFLCAWMFVGIILTALIK. Residues 519–560 lie on the Cytoplasmic side of the membrane; the sequence is SDLRRHNINTGLTNIDVKAVPVDSRVDPKPKAMVSIQSESSL. Ser542 bears the Phosphoserine mark.

It belongs to the major facilitator superfamily. Feline leukemia virus subgroup C receptor (TC 2.A.1.28.1) family.

The protein resides in the cell membrane. It carries out the reaction choline(out) = choline(in). The catalysed reaction is ethanolamine(in) = ethanolamine(out). The enzyme catalyses heme b(in) = heme b(out). In terms of biological role, uniporter that mediates the transport of extracellular choline and ethanolamine into cells, thereby playing a key role in phospholipid biosynthesis. Choline and ethanolamine are the precursors of phosphatidylcholine and phosphatidylethanolamine, respectively, the two most abundant phospholipids. Transport is not coupled with proton transport and is exclusively driven by the choline (or ethanolamine) gradient across the plasma membrane. Also acts as a heme b transporter that mediates heme efflux from the cytoplasm to the extracellular compartment. This chain is Choline/ethanolamine transporter FLVCR1 (Flvcr1), found in Mus terricolor (Earth-colored mouse).